Here is a 138-residue protein sequence, read N- to C-terminus: Large ribosomal subunit protein uL14 (138 aa).

It belongs to the universal ribosomal protein uL14 family. In terms of assembly, part of the 50S ribosomal subunit. Forms a cluster with proteins L3 and L24e, part of which may contact the 16S rRNA in 2 intersubunit bridges.

Functionally, binds to 23S rRNA. Forms part of two intersubunit bridges in the 70S ribosome. The sequence is that of Large ribosomal subunit protein uL14 from Hyperthermus butylicus (strain DSM 5456 / JCM 9403 / PLM1-5).